Reading from the N-terminus, the 2161-residue chain is Voltage-dependent L-type calcium channel subunit alpha-1D (2161 aa).

3 disordered regions span residues 1–21 (MMMMMMMKKMQHQRQQQADHA), 30–49 (TRLPLSGEGPTSQPNSSKQT), and 64–100 (KAAQTMSTSAPPPVGSLSQRKRQQYAKSKKQGNSSNS). Over 1-126 (MMMMMMMKKM…RACISIVEWK (126 aa)) the chain is Cytoplasmic. Residues 38 to 49 (GPTSQPNSSKQT) are compositionally biased toward polar residues. Over residues 82-93 (QRKRQQYAKSKK) the composition is skewed to basic residues. One copy of the I repeat lies at 113-409 (NPIRRACISI…LVLGVLSGEF (297 aa)). A helical transmembrane segment spans residues 127–145 (PFDIFILLAIFANCVALAI). The Extracellular portion of the chain corresponds to 146–163 (YIPFPEDDSNSTNHNLEK). An N-linked (GlcNAc...) asparagine glycan is attached at Asn155. The helical transmembrane segment at 164–183 (VEYAFLIIFTVETFLKIIAY) threads the bilayer. Topologically, residues 184 to 195 (GLLLHPNAYVRN) are cytoplasmic. The chain crosses the membrane as a helical span at residues 196–214 (GWNLLDFVIVIVGLFSVIL). Topologically, residues 215–235 (EQLTKETEGGNHSSGKSGGFD) are extracellular. Residue Asn225 is glycosylated (N-linked (GlcNAc...) asparagine). Residues 236–254 (VKALRAFRVLRPLRLVSGV) form a helical membrane-spanning segment. Residues 255 to 273 (PSLQVVLNSIIKAMVPLLH) are Cytoplasmic-facing. The helical transmembrane segment at 274–293 (IALLVLFVIIIYAIIGLELF) threads the bilayer. Residues 294–381 (IGKMHKTCFF…WMNDAMGFEL (88 aa)) are Extracellular-facing. A glycan (N-linked (GlcNAc...) asparagine) is linked at Asn329. Position 364 (Glu364) interacts with Ca(2+). The chain crosses the membrane as a helical span at residues 382 to 406 (PWVYFVSLVIFGSFFVLNLVLGVLS). Residues 407–523 (GEFSKEREKA…RRCRAAVKSV (117 aa)) lie on the Cytoplasmic side of the membrane. Positions 429-446 (QQLEEDLKGYLDWITQAE) are binding to the beta subunit. Residues 449-482 (DPENEEEGGEEGKRNTSMPTSETESVNTENVSGE) are disordered. A compositionally biased stretch (polar residues) spans 463-479 (NTSMPTSETESVNTENV). An II repeat occupies 509–755 (NRFNRRRCRA…VFLAIAVDNL (247 aa)). The chain crosses the membrane as a helical span at residues 524 to 543 (TFYWLVIVLVFLNTLTISSE). The Extracellular segment spans residues 544–558 (HYNQPDWLTQIQDIA). Residues 559–577 (NKVLLALFTCEMLVKMYSL) form a helical membrane-spanning segment. The Cytoplasmic segment spans residues 578 to 585 (GLQAYFVS). Residues 586-604 (LFNRFDCFVVCGGITETIL) traverse the membrane as a helical segment. The Extracellular segment spans residues 605 to 614 (VELEIMSPLG). A helical transmembrane segment spans residues 615 to 633 (ISVFRCVRLLRIFKVTRHW). At 634–652 (TSLSNLVASLLNSMKSIAS) the chain is on the cytoplasmic side. A helical membrane pass occupies residues 653–673 (LLLLLFLFIIIFSLLGMQLFG). At 674–727 (GKFNFDETQTKRSTFDNFPQALLTVFQILTGEDWNAVMYDGIMAYGGPSSSGMI) the chain is on the extracellular side. Glu705 serves as a coordination point for Ca(2+). Residues 728–752 (VCIYFIILFICGNYILLNVFLAIAV) form a helical membrane-spanning segment. Topologically, residues 753-886 (DNLADAESLN…VGCHKLINHH (134 aa)) are cytoplasmic. The segment covering 766–790 (KEEAEEKERKKIARKESLENKKNNK) has biased composition (basic and acidic residues). Residues 766–850 (KEEAEEKERK…AGPRPRRISE (85 aa)) form a disordered region. The segment covering 791–802 (PEVNQIANSDNK) has biased composition (polar residues). Residues 825-838 (VGEEEEEEEEDEPE) are compositionally biased toward acidic residues. An III repeat occupies 873 to 1155 (NPIRVGCHKL…IFVGFVIVTF (283 aa)). The chain crosses the membrane as a helical span at residues 887 to 905 (IFTNLILVFIMLSSAALAA). Topologically, residues 906–921 (EDPIRSHSFRNTILGY) are extracellular. Residues 922–941 (FDYAFTAIFTVEILLKMTTF) form a helical membrane-spanning segment. Residues 942-953 (GAFLHKGAFCRN) are Cytoplasmic-facing. The helical transmembrane segment at 954–972 (YFNLLDMLVVGVSLVSFGI) threads the bilayer. Residues 973–978 (QSSAIS) lie on the Extracellular side of the membrane. Residues 979–998 (VVKILRVLRVLRPLRAINRA) form a helical membrane-spanning segment. Topologically, residues 999–1017 (KGLKHVVQCVFVAIRTIGN) are cytoplasmic. A helical transmembrane segment spans residues 1018 to 1037 (IMIVTTLLQFMFACIGVQLF). The Extracellular segment spans residues 1038-1127 (KGKFYRCTDE…IGPIYNHRVE (90 aa)). Residues 1075–1165 (RIWQNSDFNF…QEQGEKEYKN (91 aa)) are dihydropyridine binding. Glu1101 serves as a coordination point for Ca(2+). A helical transmembrane segment spans residues 1128–1148 (ISIFFIIYIIIVAFFMMNIFV). Residues 1149–1205 (GFVIVTFQEQGEKEYKNCELDKNQRQCVEYALKARPLRRYIPKNPYQYKFWYVVNSS) lie on the Cytoplasmic side of the membrane. Residues 1192–1467 (NPYQYKFWYV…LFVAVIMDNF (276 aa)) form an IV repeat. A helical transmembrane segment spans residues 1206 to 1224 (PFEYMMFVLIMLNTLCLAM). Residues 1225 to 1239 (QHYEQSKMFNDAMDI) lie on the Extracellular side of the membrane. The helical transmembrane segment at 1240-1259 (LNMVFTGVFTVEMVLKVIAF) threads the bilayer. Residues 1260–1266 (KPKGYFS) are Cytoplasmic-facing. Residues 1267–1288 (DAWNTFDSLIVIGSIIDVALSE) form a helical membrane-spanning segment. Residues 1289–1313 (ADPTESENVPVPTATPGNSEESNRI) are Extracellular-facing. The helical transmembrane segment at 1314–1333 (SITFFRLFRVMRLVKLLSRG) threads the bilayer. The Cytoplasmic segment spans residues 1334–1352 (EGIRTLLWTFIKSFQALPY). Residues 1353-1372 (VALLIAMLFFIYAVIGMQMF) form a helical membrane-spanning segment. Over 1373 to 1439 (GKVAMRDNNQ…GEEYTCGSNF (67 aa)) the chain is Extracellular. A dihydropyridine binding region spans residues 1420 to 1486 (LCDPESDYNP…LGPHHLDEFK (67 aa)). The tract at residues 1432–1475 (EYTCGSNFAIVYFISFYMLCAFLIINLFVAVIMDNFDYLTRDWS) is phenylalkylamine binding. The chain crosses the membrane as a helical span at residues 1440–1464 (AIVYFISFYMLCAFLIINLFVAVIM). The Cytoplasmic segment spans residues 1465–2161 (DNFDYLTRDW…ADEMICITTL (697 aa)). Disordered regions lie at residues 1659–1678 (SCDLQDDEPEETKREEEDDV), 1684–1804 (ALLG…VKRT), 1872–1919 (PGRN…ASHR), and 2108–2152 (NGNV…EDLA). Polar residues predominate over residues 1745-1763 (SIGKQVPTSTNANLNNANM). The span at 1779-1797 (HVSENGHHSSHKHDREPQR) shows a compositional bias: basic and acidic residues. The span at 2138-2152 (SDEEPDPGRDEEDLA) shows a compositional bias: acidic residues.

The protein belongs to the calcium channel alpha-1 subunit (TC 1.A.1.11) family. CACNA1D subfamily. In terms of assembly, voltage-dependent calcium channels are multisubunit complexes, consisting of alpha-1, alpha-2, beta and delta subunits in a 1:1:1:1 ratio. The channel activity is directed by the pore-forming and voltage-sensitive alpha-1 subunit. In many cases, this subunit is sufficient to generate voltage-sensitive calcium channel activity. The auxiliary subunits beta and alpha-2/delta linked by a disulfide bridge regulate the channel activity. Channel activity is further modulated, depending on the presence of specific delta subunit isoforms. Interacts (via IQ domain) with CABP1 and CABP4 in a calcium independent manner. Interacts with RIMBP2. As to expression, expressed in pancreatic islets and in brain, where it has been seen in cerebral cortex, hippocampus, basal ganglia, habenula and thalamus. Expressed in the small cell lung carcinoma cell line SCC-9. No expression in skeletal muscle.

It localises to the membrane. The enzyme catalyses Ca(2+)(in) = Ca(2+)(out). Its function is as follows. Voltage-sensitive calcium channels (VSCC) mediate the entry of calcium ions into excitable cells and are also involved in a variety of calcium-dependent processes, including muscle contraction, hormone or neurotransmitter release, gene expression, cell motility, cell division and cell death. The isoform alpha-1D gives rise to L-type calcium currents. Long-lasting (L-type) calcium channels belong to the 'high-voltage activated' (HVA) group. They are blocked by dihydropyridines (DHP), phenylalkylamines, and by benzothiazepines. Functionally, voltage-sensitive calcium channels (VSCC) mediate the entry of calcium ions into excitable cells and are also involved in a variety of calcium-dependent processes, including muscle contraction, hormone or neurotransmitter release, gene expression, cell motility, cell division and cell death. The isoform alpha-1D gives rise to L-type calcium currents. In Homo sapiens (Human), this protein is Voltage-dependent L-type calcium channel subunit alpha-1D (CACNA1D).